A 1068-amino-acid chain; its full sequence is Phosphatidylinositol 4,5-bisphosphate 3-kinase catalytic subunit alpha isoform (1068 aa).

The region spanning 16 to 105 (MPPRILVECL…QPFLKVIEPV (90 aa)) is the PI3K-ABD domain. The PI3K-RBD domain occupies 187–289 (KGQIIVVIWV…GRMPNLMLMA (103 aa)). The 158-residue stretch at 330 to 487 (INSALRIKIL…DWFSSVVKFP (158 aa)) folds into the C2 PI3K-type domain. Residues 517-694 (LARDNELREN…GLLLESYCRA (178 aa)) enclose the PIK helical domain. In terms of domain architecture, PI3K/PI4K catalytic spans 765–1051 (RLEECRIMSS…QMNDAHHGGW (287 aa)). Residues 771-777 (IMSSAKR) form a G-loop region. Residues 912 to 920 (GIGDRHNSN) form a catalytic loop region. An activation loop region spans residues 931–957 (HIDFGHFLDHKKKKFGYKRERVPFVLT).

Belongs to the PI3/PI4-kinase family. In terms of assembly, heterodimer of a catalytic subunit PIK3CA and a p85 regulatory subunit (PIK3R1, PIK3R2 or PIK3R3). Interacts with IRS1 in nuclear extracts. Interacts with RUFY3. Interacts with RASD2. Interacts with APPL1. Interacts with HRAS and KRAS. Interaction with HRAS/KRAS is required for PI3K pathway signaling and cell proliferation stimulated by EGF and FGF2. Interacts with FAM83B; activates the PI3K/AKT signaling cascade.

The enzyme catalyses a 1,2-diacyl-sn-glycero-3-phospho-(1D-myo-inositol-4,5-bisphosphate) + ATP = a 1,2-diacyl-sn-glycero-3-phospho-(1D-myo-inositol-3,4,5-trisphosphate) + ADP + H(+). It carries out the reaction a 1,2-diacyl-sn-glycero-3-phospho-(1D-myo-inositol) + ATP = a 1,2-diacyl-sn-glycero-3-phospho-(1D-myo-inositol-3-phosphate) + ADP + H(+). It catalyses the reaction L-seryl-[protein] + ATP = O-phospho-L-seryl-[protein] + ADP + H(+). The catalysed reaction is 1,2-dioctanoyl-sn-glycero-3-phospho-(1D-myo-inositol-4,5-bisphosphate) + ATP = 1,2-dioctanoyl-sn-glycero-3-phospho-(1D-myo-inositol-3,4,5-trisphosphate) + ADP + H(+). The enzyme catalyses 1-octadecanoyl-2-(5Z,8Z,11Z,14Z)-eicosatetraenoyl-sn-glycero-3-phospho-1D-myo-inositol 4,5-bisphosphate + ATP = 1-octadecanoyl-2-(5Z,8Z,11Z,14Z-eicosatetraenoyl)-sn-glycero-3-phospho-(1D-myo-inositol 3,4,5-triphosphate) + ADP + H(+). It functions in the pathway phospholipid metabolism; phosphatidylinositol phosphate biosynthesis. Its function is as follows. Phosphoinositide-3-kinase (PI3K) phosphorylates phosphatidylinositol (PI) and its phosphorylated derivatives at position 3 of the inositol ring to produce 3-phosphoinositides. Uses ATP and PtdIns(4,5)P2 (phosphatidylinositol 4,5-bisphosphate) to generate phosphatidylinositol 3,4,5-trisphosphate (PIP3). PIP3 plays a key role by recruiting PH domain-containing proteins to the membrane, including AKT1 and PDPK1, activating signaling cascades involved in cell growth, survival, proliferation, motility and morphology. Participates in cellular signaling in response to various growth factors. Involved in the activation of AKT1 upon stimulation by receptor tyrosine kinases ligands such as EGF, insulin, IGF1, VEGFA and PDGF. Involved in signaling via insulin-receptor substrate (IRS) proteins. Essential in endothelial cell migration during vascular development through VEGFA signaling, possibly by regulating RhoA activity. Required for lymphatic vasculature development, possibly by binding to RAS and by activation by EGF and FGF2, but not by PDGF. Regulates invadopodia formation through the PDPK1-AKT1 pathway. Participates in cardiomyogenesis in embryonic stem cells through a AKT1 pathway. Participates in vasculogenesis in embryonic stem cells through PDK1 and protein kinase C pathway. In addition to its lipid kinase activity, it displays a serine-protein kinase activity that results in the autophosphorylation of the p85alpha regulatory subunit as well as phosphorylation of other proteins such as 4EBP1, H-Ras, the IL-3 beta c receptor and possibly others. Plays a role in the positive regulation of phagocytosis and pinocytosis. The polypeptide is Phosphatidylinositol 4,5-bisphosphate 3-kinase catalytic subunit alpha isoform (PIK3CA) (Homo sapiens (Human)).